A 253-amino-acid polypeptide reads, in one-letter code: MRILLSNDDGIHAPGIQALAKALREFAEVQVVAPDRNRSGASNSLTLESSLRTFTYPNGDIAVQMGTPTDCVFLGVNALMRPRPDVVVSGINAGPNLGDDVIYSGTVAAAMEGRHLGLPALAVSLNGHEHYETAAAVTCTLLRALAREPLRTGRILNINVPDLPLEEIKGIRVTRCGSRHPADKVIPQDDPRGNTLYWIGPPGEKLDAGPDTDFAAVDEGYVSVTPLHVDLTAHSAQDVVTRWLSSAGVNGQW.

Residues Asp8, Asp9, Ser39, and Asn92 each coordinate a divalent metal cation.

Belongs to the SurE nucleotidase family. A divalent metal cation serves as cofactor.

Its subcellular location is the cytoplasm. It carries out the reaction a ribonucleoside 5'-phosphate + H2O = a ribonucleoside + phosphate. It catalyses the reaction a ribonucleoside 3'-phosphate + H2O = a ribonucleoside + phosphate. The enzyme catalyses [phosphate](n) + H2O = [phosphate](n-1) + phosphate + H(+). Its function is as follows. Nucleotidase with a broad substrate specificity as it can dephosphorylate various ribo- and deoxyribonucleoside 5'-monophosphates and ribonucleoside 3'-monophosphates with highest affinity to 3'-AMP. Also hydrolyzes polyphosphate (exopolyphosphatase activity) with the preference for short-chain-length substrates (P20-25). Might be involved in the regulation of dNTP and NTP pools, and in the turnover of 3'-mononucleotides produced by numerous intracellular RNases (T1, T2, and F) during the degradation of various RNAs. The protein is 5'/3'-nucleotidase SurE of Cronobacter sakazakii (strain ATCC BAA-894) (Enterobacter sakazakii).